We begin with the raw amino-acid sequence, 233 residues long: Small ribosomal subunit protein uS2 (233 aa).

It belongs to the universal ribosomal protein uS2 family.

The chain is Small ribosomal subunit protein uS2 from Clostridium botulinum (strain Hall / ATCC 3502 / NCTC 13319 / Type A).